Consider the following 1058-residue polypeptide: Carbamoyl phosphate synthase large chain (1058 aa).

The segment at 1-401 (MPKRKDIKTI…SLLKAIRSLE (401 aa)) is carboxyphosphate synthetic domain. Residues Arg-129, Arg-169, Gly-175, Gly-176, Lys-208, Ile-210, Glu-215, Gly-241, Ile-242, His-243, Gln-284, and Glu-298 each contribute to the ATP site. The ATP-grasp 1 domain occupies 133–327 (RDLMNELNEP…IAKIAAKIAV (195 aa)). Positions 284, 298, and 300 each coordinate Mg(2+). Residues Gln-284, Glu-298, and Asn-300 each coordinate Mn(2+). Residues 402 to 546 (YGVHHLGLPN…YSTYEFENES (145 aa)) are oligomerization domain. The segment at 547-929 (TRSDKEKIVV…ALYKGLTAAG (383 aa)) is carbamoyl phosphate synthetic domain. Positions 671–861 (EKLLIGLKIP…VANIAMQCIL (191 aa)) constitute an ATP-grasp 2 domain. ATP is bound by residues Arg-707, Arg-746, Leu-748, Glu-752, Gly-777, Val-778, His-779, Ser-780, Gln-820, and Glu-832. Residues Gln-820, Glu-832, and Asn-834 each contribute to the Mg(2+) site. Mn(2+) is bound by residues Gln-820, Glu-832, and Asn-834. Positions 930-1058 (IKIKDYGRVL…ESMSFRVQTL (129 aa)) constitute an MGS-like domain. The tract at residues 930 to 1058 (IKIKDYGRVL…ESMSFRVQTL (129 aa)) is allosteric domain.

This sequence belongs to the CarB family. In terms of assembly, composed of two chains; the small (or glutamine) chain promotes the hydrolysis of glutamine to ammonia, which is used by the large (or ammonia) chain to synthesize carbamoyl phosphate. Tetramer of heterodimers (alpha,beta)4. It depends on Mg(2+) as a cofactor. Mn(2+) is required as a cofactor.

The enzyme catalyses hydrogencarbonate + L-glutamine + 2 ATP + H2O = carbamoyl phosphate + L-glutamate + 2 ADP + phosphate + 2 H(+). The catalysed reaction is hydrogencarbonate + NH4(+) + 2 ATP = carbamoyl phosphate + 2 ADP + phosphate + 2 H(+). The protein operates within amino-acid biosynthesis; L-arginine biosynthesis; carbamoyl phosphate from bicarbonate: step 1/1. It functions in the pathway pyrimidine metabolism; UMP biosynthesis via de novo pathway; (S)-dihydroorotate from bicarbonate: step 1/3. In terms of biological role, large subunit of the glutamine-dependent carbamoyl phosphate synthetase (CPSase). CPSase catalyzes the formation of carbamoyl phosphate from the ammonia moiety of glutamine, carbonate, and phosphate donated by ATP, constituting the first step of 2 biosynthetic pathways, one leading to arginine and/or urea and the other to pyrimidine nucleotides. The large subunit (synthetase) binds the substrates ammonia (free or transferred from glutamine from the small subunit), hydrogencarbonate and ATP and carries out an ATP-coupled ligase reaction, activating hydrogencarbonate by forming carboxy phosphate which reacts with ammonia to form carbamoyl phosphate. This Fusobacterium nucleatum subsp. nucleatum (strain ATCC 25586 / DSM 15643 / BCRC 10681 / CIP 101130 / JCM 8532 / KCTC 2640 / LMG 13131 / VPI 4355) protein is Carbamoyl phosphate synthase large chain.